The sequence spans 38 residues: Odorant-binding protein 2 (38 aa).

The protein belongs to the calycin superfamily. Lipocalin family. Nasal mucosa.

It localises to the secreted. The protein resides in the extracellular space. This soluble protein may play a specific role in odor discrimination and perception. This chain is Odorant-binding protein 2, found in Hystrix cristata (North African crested porcupine).